Reading from the N-terminus, the 954-residue chain is Zinc finger protein 618 (954 aa).

Methionine 1 carries the post-translational modification N-acetylmethionine. The span at 1–19 (MNQPGGAAAPQADGASAAG) shows a compositional bias: low complexity. The tract at residues 1–56 (MNQPGGAAAPQADGASAAGRKSTASRERLKRSQKSTKVEGPEPVPAEASLSAEQGT) is disordered. Residues lysine 63 and lysine 81 each participate in a glycyl lysine isopeptide (Lys-Gly) (interchain with G-Cter in SUMO2) cross-link. C2H2-type zinc fingers lie at residues 147 to 169 (YECGICGKKYKYYNCFQTHVRAH) and 188 to 210 (YTCDICGKKYKYYSCFQEHRDLH). Lysine 239 participates in a covalent cross-link: Glycyl lysine isopeptide (Lys-Gly) (interchain with G-Cter in SUMO2). The segment at 256-278 (YTCEFCGKQYKYYTPYQEHVALH) adopts a C2H2-type 3 zinc-finger fold. 2 disordered regions span residues 282 to 307 (STAPGWEPPDDPDTGSECSHPEVSPS) and 337 to 390 (RTPP…NSSE). Residues 340 to 357 (PATQTQTFRTPNSGSPAS) are compositionally biased toward polar residues. The segment covering 366-380 (FSRRVEGKAQNHFEE) has biased composition (basic and acidic residues). The C2H2-type 4 zinc-finger motif lies at 392–414 (YTCGACGIQFQFYNNLLEHMQSH). Positions 421-463 (NIASNQSRSPPAVVEEKWKPQAQRNSANNTTTSGLTPNSMIPE) are disordered. Lysine 437 is covalently cross-linked (Glycyl lysine isopeptide (Lys-Gly) (interchain with G-Cter in SUMO2)). Over residues 442-459 (AQRNSANNTTTSGLTPNS) the composition is skewed to polar residues.

Belongs to the krueppel C2H2-type zinc-finger protein family. In terms of assembly, interacts with UHRF2.

The protein resides in the nucleus. The protein localises to the chromosome. In terms of biological role, regulates UHRF2 function as a specific 5-hydroxymethylcytosine (5hmC) reader by regulating its chromatin localization. This Homo sapiens (Human) protein is Zinc finger protein 618 (ZNF618).